The chain runs to 172 residues: uncharacterized protein (172 aa).

A helical membrane pass occupies residues 109-129 (MLLLYLYYNLLLLTASTPLTF).

It localises to the membrane. This is an uncharacterized protein from Saccharomyces cerevisiae (strain ATCC 204508 / S288c) (Baker's yeast).